A 168-amino-acid polypeptide reads, in one-letter code: G/U mismatch-specific DNA glycosylase (168 aa).

It belongs to the uracil-DNA glycosylase (UDG) superfamily. TDG/mug family. As to quaternary structure, binds DNA as a monomer.

It localises to the cytoplasm. The catalysed reaction is Specifically hydrolyzes mismatched double-stranded DNA and polynucleotides, releasing free uracil.. Functionally, excises ethenocytosine and uracil, which can arise by alkylation or deamination of cytosine, respectively, from the corresponding mispairs with guanine in ds-DNA. It is capable of hydrolyzing the carbon-nitrogen bond between the sugar-phosphate backbone of the DNA and the mispaired base. The complementary strand guanine functions in substrate recognition. Required for DNA damage lesion repair in stationary-phase cells. The polypeptide is G/U mismatch-specific DNA glycosylase (Escherichia coli (strain SMS-3-5 / SECEC)).